A 154-amino-acid chain; its full sequence is MKLHDLTPAPGSRKPKKRVGRGPGGTDKTAGRGHKGQKSRSGAGKGPFFEGGRSTLISRLPKRGFNNVGTTYEVVNLAQLARVEGDTLDRTALERAGLVRRKDRPVKLLARGQVTRAVTVQVDAASEAAIRAVEAAGGRVVVTGADRQNAEQAG.

The tract at residues 1–54 (MKLHDLTPAPGSRKPKKRVGRGPGGTDKTAGRGHKGQKSRSGAGKGPFFEGGRS) is disordered.

This sequence belongs to the universal ribosomal protein uL15 family. As to quaternary structure, part of the 50S ribosomal subunit.

Functionally, binds to the 23S rRNA. In Deinococcus geothermalis (strain DSM 11300 / CIP 105573 / AG-3a), this protein is Large ribosomal subunit protein uL15.